The following is a 703-amino-acid chain: Methionine--tRNA ligase (703 aa).

The short motif at 12–22 (PYANGPLHIGH) is the 'HIGH' region element. The Zn(2+) site is built by cysteine 143, cysteine 146, cysteine 156, and cysteine 159. The 'KMSKS' region signature appears at 331–335 (KMSKT). Residue lysine 334 coordinates ATP. Low complexity-rich tracts occupy residues 556–568 (AAPQ…PAKG) and 577–594 (EAPA…AAES). Disordered regions lie at residues 556–594 (AAPQ…AAES) and 682–703 (GPGG…SEVK). The region spanning 602–703 (DFAKVVLKAG…GDVAPGSEVK (102 aa)) is the tRNA-binding domain.

Belongs to the class-I aminoacyl-tRNA synthetase family. MetG type 1 subfamily. In terms of assembly, homodimer. Zn(2+) is required as a cofactor.

It is found in the cytoplasm. The catalysed reaction is tRNA(Met) + L-methionine + ATP = L-methionyl-tRNA(Met) + AMP + diphosphate. Its function is as follows. Is required not only for elongation of protein synthesis but also for the initiation of all mRNA translation through initiator tRNA(fMet) aminoacylation. In Myxococcus xanthus (strain DK1622), this protein is Methionine--tRNA ligase.